The chain runs to 101 residues: Protein Tat (101 aa).

Residues 1 to 24 are interaction with human CREBBP; the sequence is MDPVDPKLEPWNHPGSQPTTPCNK. The interval 1–48 is transactivation; sequence MDPVDPKLEPWNHPGSQPTTPCNKCYCKVCCWHCQVCFLNKGLGISYG. Zn(2+) contacts are provided by Cys22, Cys25, and Cys27. The cysteine-rich stretch occupies residues 22–37; it reads CNKCYCKVCCWHCQVC. Lys28 is modified (N6-acetyllysine; by host PCAF). Zn(2+)-binding residues include Cys30, His33, Cys34, and Cys37. The segment at 38–48 is core; sequence FLNKGLGISYG. Residues 48 to 101 are disordered; the sequence is GRKKRRPRRGTPQGSKDHQNPVPKQPLPITSGNPTGSEKPKKEVASKTETDPLD. Residues 49-57 carry the Nuclear localization signal, RNA-binding (TAR), and protein transduction motif; it reads RKKRRPRRG. The interval 49–86 is interaction with the host capping enzyme RNGTT; that stretch reads RKKRRPRRGTPQGSKDHQNPVPKQPLPITSGNPTGSEK. Lys50 and Lys51 each carry N6-acetyllysine; by host EP300 and GCN5L2. An asymmetric dimethylarginine; by host PRMT6 mark is found at Arg52 and Arg53. Residue Lys71 forms a Glycyl lysine isopeptide (Lys-Gly) (interchain with G-Cter in ubiquitin) linkage. Residues 85–101 show a composition bias toward basic and acidic residues; the sequence is EKPKKEVASKTETDPLD.

It belongs to the lentiviruses Tat family. Interacts with host CCNT1. Associates with the P-TEFb complex composed at least of Tat, P-TEFb (CDK9 and CCNT1), TAR RNA, RNA Pol II. Recruits the HATs CREBBP, TAF1/TFIID, EP300, PCAF and GCN5L2. Interacts with host KAT5/Tip60; this interaction targets the latter to degradation. Interacts with the host deacetylase SIRT1. Interacts with host capping enzyme RNGTT; this interaction stimulates RNGTT. Binds to host KDR, and to the host integrins ITGAV/ITGB3 and ITGA5/ITGB1. Interacts with host KPNB1/importin beta-1 without previous binding to KPNA1/importin alpha-1. Interacts with EIF2AK2. Interacts with host nucleosome assembly protein NAP1L1; this interaction may be required for the transport of Tat within the nucleus, since the two proteins interact at the nuclear rim. Interacts with host C1QBP/SF2P32; this interaction involves lysine-acetylated Tat. Interacts with the host chemokine receptors CCR2, CCR3 and CXCR4. Interacts with host DPP4/CD26; this interaction may trigger an anti-proliferative effect. Interacts with host LDLR. Interacts with the host extracellular matrix metalloproteinase MMP1. Interacts with host PRMT6; this interaction mediates Tat's methylation. Interacts with, and is ubiquitinated by MDM2/Hdm2. Interacts with host PSMC3 and HTATIP2. Interacts with STAB1; this interaction may overcome SATB1-mediated repression of IL2 and IL2RA (interleukin) in T cells by binding to the same domain than HDAC1. Interacts (when acetylated) with human CDK13, thereby increasing HIV-1 mRNA splicing and promoting the production of the doubly spliced HIV-1 protein Nef. Interacts with host TBP; this interaction modulates the activity of transcriptional pre-initiation complex. Interacts with host RELA. Interacts with host PLSCR1; this interaction negatively regulates Tat transactivation activity by altering its subcellular distribution. Asymmetrical arginine methylation by host PRMT6 seems to diminish the transactivation capacity of Tat and affects the interaction with host CCNT1. In terms of processing, acetylation by EP300, CREBBP, GCN5L2/GCN5 and PCAF regulates the transactivation activity of Tat. EP300-mediated acetylation of Lys-50 promotes dissociation of Tat from the TAR RNA through the competitive binding to PCAF's bromodomain. In addition, the non-acetylated Tat's N-terminus can also interact with PCAF. PCAF-mediated acetylation of Lys-28 enhances Tat's binding to CCNT1. Lys-50 is deacetylated by SIRT1. Post-translationally, polyubiquitination by host MDM2 does not target Tat to degradation, but activates its transactivation function and fosters interaction with CCNT1 and TAR RNA. Phosphorylated by EIF2AK2 on serine and threonine residues adjacent to the basic region important for TAR RNA binding and function. Phosphorylation of Tat by EIF2AK2 is dependent on the prior activation of EIF2AK2 by dsRNA.

The protein resides in the host nucleus. It localises to the host nucleolus. It is found in the host cytoplasm. Its subcellular location is the secreted. Its function is as follows. Transcriptional activator that increases RNA Pol II processivity, thereby increasing the level of full-length viral transcripts. Recognizes a hairpin structure at the 5'-LTR of the nascent viral mRNAs referred to as the transactivation responsive RNA element (TAR) and recruits the cyclin T1-CDK9 complex (P-TEFb complex) that will in turn hyperphosphorylate the RNA polymerase II to allow efficient elongation. The CDK9 component of P-TEFb and other Tat-activated kinases hyperphosphorylate the C-terminus of RNA Pol II that becomes stabilized and much more processive. Other factors such as HTATSF1/Tat-SF1, SUPT5H/SPT5, and HTATIP2 are also important for Tat's function. Besides its effect on RNA Pol II processivity, Tat induces chromatin remodeling of proviral genes by recruiting the histone acetyltransferases (HATs) CREBBP, EP300 and PCAF to the chromatin. This also contributes to the increase in proviral transcription rate, especially when the provirus integrates in transcriptionally silent region of the host genome. To ensure maximal activation of the LTR, Tat mediates nuclear translocation of NF-kappa-B by interacting with host RELA. Through its interaction with host TBP, Tat may also modulate transcription initiation. Tat can reactivate a latently infected cell by penetrating in it and transactivating its LTR promoter. In the cytoplasm, Tat is thought to act as a translational activator of HIV-1 mRNAs. Functionally, extracellular circulating Tat can be endocytosed by surrounding uninfected cells via the binding to several surface receptors such as CD26, CXCR4, heparan sulfate proteoglycans (HSPG) or LDLR. Neurons are rarely infected, but they internalize Tat via their LDLR. Through its interaction with nuclear HATs, Tat is potentially able to control the acetylation-dependent cellular gene expression. Modulates the expression of many cellular genes involved in cell survival, proliferation or in coding for cytokines or cytokine receptors. Tat plays a role in T-cell and neurons apoptosis. Tat induced neurotoxicity and apoptosis probably contribute to neuroAIDS. Circulating Tat also acts as a chemokine-like and/or growth factor-like molecule that binds to specific receptors on the surface of the cells, affecting many cellular pathways. In the vascular system, Tat binds to ITGAV/ITGB3 and ITGA5/ITGB1 integrins dimers at the surface of endothelial cells and competes with bFGF for heparin-binding sites, leading to an excess of soluble bFGF. The chain is Protein Tat from Homo sapiens (Human).